The primary structure comprises 362 residues: Adenosine deaminase (362 aa).

Zn(2+)-binding residues include H19 and H21. The substrate site is built by H21, D23, and G181. H208 is a binding site for Zn(2+). E211 functions as the Proton donor in the catalytic mechanism. D300 contacts Zn(2+).

The protein belongs to the metallo-dependent hydrolases superfamily. Adenosine and AMP deaminases family. Adenosine deaminase subfamily. Requires Zn(2+) as cofactor.

The enzyme catalyses adenosine + H2O + H(+) = inosine + NH4(+). The catalysed reaction is 2'-deoxyadenosine + H2O + H(+) = 2'-deoxyinosine + NH4(+). Functionally, catalyzes the hydrolytic deamination of adenosine and 2-deoxyadenosine. In Mycolicibacterium gilvum (strain PYR-GCK) (Mycobacterium gilvum (strain PYR-GCK)), this protein is Adenosine deaminase.